We begin with the raw amino-acid sequence, 262 residues long: Protein FLOURY 2 (262 aa).

Positions 1 to 21 are cleaved as a signal peptide; the sequence is MATKILALLALLALLVSATNA.

This sequence belongs to the zein family.

The protein resides in the endoplasmic reticulum membrane. Functionally, zeins are major seed storage proteins. The sequence is that of Protein FLOURY 2 from Zea mays (Maize).